A 174-amino-acid polypeptide reads, in one-letter code: CASP-like protein 1 (174 aa).

Positions 1 to 25 (MDSKSGRSESAINIPESNSTKHKST) are disordered. Over 1-46 (MDSKSGRSESAINIPESNSTKHKSTAVHTATKVAAVAPRGGGWRRG) the chain is Cytoplasmic. The span at 8–18 (SESAINIPESN) shows a compositional bias: polar residues. A helical membrane pass occupies residues 47-67 (VSIFDFILRICALAAALAATA). The Extracellular segment spans residues 68–96 (TMGTTDQTLPFFTQIIQFQASYDDLPVFT). Residues 97-117 (FFVVANGIASGYLVLSLPFSI) traverse the membrane as a helical segment. At 118-119 (AT) the chain is on the cytoplasmic side. Residues 120–139 (IVRPHAAAIKLLLIIFDTQF) traverse the membrane as a helical segment. The Extracellular portion of the chain corresponds to 140 to 150 (NDFCQRVSGAV). Residues 151-171 (VASFVAAVILIFLVVLSAVAI) form a helical membrane-spanning segment. Over 172–174 (RKH) the chain is Cytoplasmic.

This sequence belongs to the Casparian strip membrane proteins (CASP) family. As to quaternary structure, homodimer and heterodimers.

It is found in the cell membrane. This Triphysaria pusilla (Dwarf owl's-clover) protein is CASP-like protein 1.